Here is a 297-residue protein sequence, read N- to C-terminus: 4-hydroxy-tetrahydrodipicolinate synthase (297 aa).

Thr-49 is a pyruvate binding site. Catalysis depends on Tyr-137, which acts as the Proton donor/acceptor. Lys-166 serves as the catalytic Schiff-base intermediate with substrate. Residue Ile-208 coordinates pyruvate.

This sequence belongs to the DapA family. In terms of assembly, homotetramer; dimer of dimers.

The protein resides in the cytoplasm. The enzyme catalyses L-aspartate 4-semialdehyde + pyruvate = (2S,4S)-4-hydroxy-2,3,4,5-tetrahydrodipicolinate + H2O + H(+). It functions in the pathway amino-acid biosynthesis; L-lysine biosynthesis via DAP pathway; (S)-tetrahydrodipicolinate from L-aspartate: step 3/4. Catalyzes the condensation of (S)-aspartate-beta-semialdehyde [(S)-ASA] and pyruvate to 4-hydroxy-tetrahydrodipicolinate (HTPA). The sequence is that of 4-hydroxy-tetrahydrodipicolinate synthase from Chlorobium phaeobacteroides (strain BS1).